A 253-amino-acid chain; its full sequence is MRILLSNDDGIHAPGIQTLAKYLREFADVQVVAPDRNRSGASNSLTLESSLRTFAFENGDIAVQMGTPTDCVFLGVNTLMRPGPDVVVSGINAGPNLGDDVIYSGTVAAAMEGRHLGFPALAVSLNGHQHYDTAAAVTCSILRALSREPLRTGRILNINVPDLPLDEIKGIRVTRCGSRHPADQVIPQQDPRGNTLYWIGPPGDKCDAGPDTDFAAVDEGYVSVTPLHVDLTAYNAQDVVSGWLERAGVNTQW.

Positions 8, 9, 39, and 92 each coordinate a divalent metal cation.

It belongs to the SurE nucleotidase family. Requires a divalent metal cation as cofactor.

Its subcellular location is the cytoplasm. It catalyses the reaction a ribonucleoside 5'-phosphate + H2O = a ribonucleoside + phosphate. The catalysed reaction is a ribonucleoside 3'-phosphate + H2O = a ribonucleoside + phosphate. The enzyme catalyses [phosphate](n) + H2O = [phosphate](n-1) + phosphate + H(+). Nucleotidase with a broad substrate specificity as it can dephosphorylate various ribo- and deoxyribonucleoside 5'-monophosphates and ribonucleoside 3'-monophosphates with highest affinity to 3'-AMP. Also hydrolyzes polyphosphate (exopolyphosphatase activity) with the preference for short-chain-length substrates (P20-25). Might be involved in the regulation of dNTP and NTP pools, and in the turnover of 3'-mononucleotides produced by numerous intracellular RNases (T1, T2, and F) during the degradation of various RNAs. The protein is 5'/3'-nucleotidase SurE of Enterobacter sp. (strain 638).